The sequence spans 445 residues: RNA pseudouridine synthase 2, chloroplastic (445 aa).

Residues 1–44 (MATTAAASPPAIATALSALLRRQRRRSSRCVGASHARCLAADAN) constitute a chloroplast transit peptide. The interval 47 to 66 (AVAPSRRGGHGGTRLEEAVP) is disordered. The 76-residue stretch at 72-147 (SRIDAWISAR…IPLDIVYEDD (76 aa)) folds into the S4 RNA-binding domain. The active site involves aspartate 235.

The protein belongs to the pseudouridine synthase RluA family.

The protein localises to the plastid. It localises to the chloroplast. The catalysed reaction is a uridine in RNA = a pseudouridine in RNA. This is RNA pseudouridine synthase 2, chloroplastic from Oryza sativa subsp. japonica (Rice).